A 466-amino-acid chain; its full sequence is Asparagine--tRNA ligase (466 aa).

The protein belongs to the class-II aminoacyl-tRNA synthetase family. In terms of assembly, homodimer.

Its subcellular location is the cytoplasm. It catalyses the reaction tRNA(Asn) + L-asparagine + ATP = L-asparaginyl-tRNA(Asn) + AMP + diphosphate + H(+). This chain is Asparagine--tRNA ligase, found in Yersinia pseudotuberculosis serotype O:1b (strain IP 31758).